The sequence spans 321 residues: MDFRLLNEKSQIFVHAEPYAVSDYVNQYVGTHSIRLPKGGRPAGRLHHRIFGGLDLCRISYGGSVRVISPGLETCYHLQIILKGHCLWRDHGQEHYFAPGELLLLNPDDQADLTYSEDCEKFIVKLPSVVLDRACSENNWHKPREGIRFAARHNLQQLDGFINLLGLVCDEAEHTKSMPRVQEHYAGIIASKLLEMLGSNVSREIFSKGNPSFERVVQFIEENLKRNISLERLAELAMMSPRSLYNLFEKHAGTTPKNYIRNRKLESIRACLNDPSANVRSITEIALDYGFLHLGRFAENYRSAFGELPSDTLRQCKKEVA.

Positions 214–315 constitute an HTH araC/xylS-type domain; it reads ERVVQFIEEN…GELPSDTLRQ (102 aa). 2 consecutive DNA-binding regions (H-T-H motif) follow at residues 231–252 and 282–305; these read ERLAELAMMSPRSLYNLFEKHA and ITEIALDYGFLHLGRFAENYRSAF.

Its subcellular location is the cytoplasm. In terms of biological role, regulatory protein of the TOL plasmid xyl operons. XylS activates the xylXYZLTEGFJQKIH operon required for the degradation of toluene, m-xylene and p-xylene. This Pseudomonas putida (Arthrobacter siderocapsulatus) protein is XylDLEGF operon transcriptional activator 1 (xylS1).